The sequence spans 143 residues: Small ribosomal subunit protein uS12 (143 aa).

Pro62 is subject to Hydroxyproline.

The protein belongs to the universal ribosomal protein uS12 family.

The protein is Small ribosomal subunit protein uS12 (rps23) of Dictyostelium discoideum (Social amoeba).